An 80-amino-acid chain; its full sequence is Gamma-conotoxin-like Am6.6 (80 aa).

Residues 1–19 (MEKLTILLLVAAILMSTQA) form the signal peptide. Residues 20–45 (LNQEQRQQAKINLLSKKKPSAERWRR) constitute a propeptide that is removed on maturation. Intrachain disulfides connect Cys-47–Cys-61, Cys-54–Cys-65, and Cys-60–Cys-70. 2 positions are modified to 4-carboxyglutamate: Glu-56 and Glu-59. Position 71 is a 4-carboxyglutamate (Glu-71). Residue Pro-76 is modified to 4-hydroxyproline. The propeptide occupies 78-80 (RAI).

The protein belongs to the conotoxin O2 family. As to expression, expressed by the venom duct.

It localises to the secreted. In terms of biological role, gamma-conotoxins may act on voltage-gated non-specific cation pacemaker channels (HCN). In Conus amadis (Amadis cone), this protein is Gamma-conotoxin-like Am6.6.